The chain runs to 428 residues: MLDPKFLRTELEATAERLATRGFILDVERLSKLEEKRKSLQMATEELQASRNAISKSIGQAKAKGEDVAPIMAQVGDLGSQLDTKKQELAELLETLNAIAMSVPNLPDESVPAGADESENVEVRRWGTPKEFNFEVKDHVELGETLGGLDFKAAVKITGTRFIIMKGQIARMNRALAQFMLDLHTTEHGYTEAYVPLLVNEESLLGTGQLPKFGEDLFHTKPATEEGQGLSLIPTAEVPLTNIARDTIIDEADLPVKLTAHTPCFRSEAGSYGRDTRGLIRQHQFDKVELVQLVKPEDSMAALDSLTGHAETVLQKLELPYRTVVLCTGDMGFGSSKTFDIEVWLPAQNTYREISSCSNMQDFQARRMQARYKAKSAKKPALLHTLNGSGLAVGRTLVAVIENYQNEDGSITVPEVLRPYMGGLEKIG.

Residue Thr235–Glu237 participates in L-serine binding. Residue Arg266–Glu268 participates in ATP binding. Glu289 contributes to the L-serine binding site. ATP is bound at residue Glu353–Ser356. Residue Ser389 coordinates L-serine.

The protein belongs to the class-II aminoacyl-tRNA synthetase family. Type-1 seryl-tRNA synthetase subfamily. As to quaternary structure, homodimer. The tRNA molecule binds across the dimer.

It is found in the cytoplasm. It catalyses the reaction tRNA(Ser) + L-serine + ATP = L-seryl-tRNA(Ser) + AMP + diphosphate + H(+). The enzyme catalyses tRNA(Sec) + L-serine + ATP = L-seryl-tRNA(Sec) + AMP + diphosphate + H(+). It functions in the pathway aminoacyl-tRNA biosynthesis; selenocysteinyl-tRNA(Sec) biosynthesis; L-seryl-tRNA(Sec) from L-serine and tRNA(Sec): step 1/1. Functionally, catalyzes the attachment of serine to tRNA(Ser). Is also able to aminoacylate tRNA(Sec) with serine, to form the misacylated tRNA L-seryl-tRNA(Sec), which will be further converted into selenocysteinyl-tRNA(Sec). The sequence is that of Serine--tRNA ligase from Shewanella sediminis (strain HAW-EB3).